The following is a 291-amino-acid chain: 4-hydroxy-tetrahydrodipicolinate synthase (291 aa).

T45 contacts pyruvate. Residue Y131 is the Proton donor/acceptor of the active site. Catalysis depends on K159, which acts as the Schiff-base intermediate with substrate. I202 contacts pyruvate.

It belongs to the DapA family. As to quaternary structure, homotetramer; dimer of dimers.

The protein resides in the cytoplasm. It catalyses the reaction L-aspartate 4-semialdehyde + pyruvate = (2S,4S)-4-hydroxy-2,3,4,5-tetrahydrodipicolinate + H2O + H(+). Its pathway is amino-acid biosynthesis; L-lysine biosynthesis via DAP pathway; (S)-tetrahydrodipicolinate from L-aspartate: step 3/4. Catalyzes the condensation of (S)-aspartate-beta-semialdehyde [(S)-ASA] and pyruvate to 4-hydroxy-tetrahydrodipicolinate (HTPA). The sequence is that of 4-hydroxy-tetrahydrodipicolinate synthase from Methanosarcina barkeri (strain Fusaro / DSM 804).